Here is a 265-residue protein sequence, read N- to C-terminus: MDNLLTALILSIVEGLTEFLPVSSSGHLILAGDLLGFVGEKAATFDVVIQLGAIMAVVVLYWKRFWGLVRPQPYARFAGRRGIVLLMLTSLPACILGLLLHAYIKEYLFRPATVLIALVVGAICMILVEKRKFKPTCISLDDMTPRLALGIGCFQCLALWPGFSRSAATIMGGMLLGAKRPLAAEYSFIAAVPIMVAATGYDLLKNLSMFTAADIPFFLVGMIGSFVSALLAVKVFVALVGRMTLIPFACYRLLIAPFVYYFMVN.

Helical transmembrane passes span 42-62 (AATF…VLYW), 82-102 (GIVL…LLHA), 108-128 (LFRP…MILV), 157-177 (LALW…MLLG), 181-201 (PLAA…ATGY), 217-237 (FFLV…KVFV), and 244-264 (TLIP…YFMV).

This sequence belongs to the UppP family.

It localises to the cell inner membrane. It catalyses the reaction di-trans,octa-cis-undecaprenyl diphosphate + H2O = di-trans,octa-cis-undecaprenyl phosphate + phosphate + H(+). Its function is as follows. Catalyzes the dephosphorylation of undecaprenyl diphosphate (UPP). Confers resistance to bacitracin. This chain is Undecaprenyl-diphosphatase, found in Desulfovibrio desulfuricans (strain ATCC 27774 / DSM 6949 / MB).